We begin with the raw amino-acid sequence, 515 residues long: Cytochrome P450 1A2 (515 aa).

S69 is a glycosylation site (O-linked (GlcNAc) serine). F226 provides a ligand contact to substrate. C458 is a binding site for heme.

The protein belongs to the cytochrome P450 family. In terms of assembly, interacts with PGRMC1; the interaction requires PGRMC1 homodimerization. Requires heme as cofactor.

The protein resides in the endoplasmic reticulum membrane. Its subcellular location is the microsome membrane. The catalysed reaction is an organic molecule + reduced [NADPH--hemoprotein reductase] + O2 = an alcohol + oxidized [NADPH--hemoprotein reductase] + H2O + H(+). The enzyme catalyses 17beta-estradiol + reduced [NADPH--hemoprotein reductase] + O2 = 2-hydroxy-17beta-estradiol + oxidized [NADPH--hemoprotein reductase] + H2O + H(+). It carries out the reaction 17beta-estradiol + reduced [NADPH--hemoprotein reductase] + O2 = 4-hydroxy-17beta-estradiol + oxidized [NADPH--hemoprotein reductase] + H2O + H(+). It catalyses the reaction estrone + reduced [NADPH--hemoprotein reductase] + O2 = 2-hydroxyestrone + oxidized [NADPH--hemoprotein reductase] + H2O + H(+). The catalysed reaction is estrone + reduced [NADPH--hemoprotein reductase] + O2 = 4-hydroxyestrone + oxidized [NADPH--hemoprotein reductase] + H2O + H(+). The enzyme catalyses cholesterol + reduced [NADPH--hemoprotein reductase] + O2 = 25-hydroxycholesterol + oxidized [NADPH--hemoprotein reductase] + H2O + H(+). It carries out the reaction all-trans-retinol + reduced [NADPH--hemoprotein reductase] + O2 = all-trans-retinal + oxidized [NADPH--hemoprotein reductase] + 2 H2O + H(+). It catalyses the reaction all-trans-retinal + reduced [NADPH--hemoprotein reductase] + O2 = all-trans-retinoate + oxidized [NADPH--hemoprotein reductase] + H2O + 2 H(+). The catalysed reaction is (5Z,8Z,11Z,14Z)-eicosatetraenoate + reduced [NADPH--hemoprotein reductase] + O2 = (14R,15S)-epoxy-(5Z,8Z,11Z)-eicosatrienoate + oxidized [NADPH--hemoprotein reductase] + H2O + H(+). The enzyme catalyses (5Z,8Z,11Z,14Z)-eicosatetraenoate + reduced [NADPH--hemoprotein reductase] + O2 = (14S,15R)-epoxy-(5Z,8Z,11Z)-eicosatrienoate + oxidized [NADPH--hemoprotein reductase] + H2O + H(+). It carries out the reaction (5Z,8Z,11Z,14Z,17Z)-eicosapentaenoate + reduced [NADPH--hemoprotein reductase] + O2 = (17R,18S)-epoxy-(5Z,8Z,11Z,14Z)-eicosatetraenoate + oxidized [NADPH--hemoprotein reductase] + H2O + H(+). It catalyses the reaction (4Z,7Z,10Z,13Z,16Z,19Z)-docosahexaenoate + reduced [NADPH--hemoprotein reductase] + O2 = (19R,20S)-epoxy-(4Z,7Z,10Z,13Z,16Z)-docosapentaenoate + oxidized [NADPH--hemoprotein reductase] + H2O + H(+). The catalysed reaction is (5S)-hydroperoxy-(6E,8Z,11Z,14Z)-eicosatetraenoate = 5-oxo-(6E,8Z,11Z,14Z)-eicosatetraenoate + H2O. The enzyme catalyses (12S)-hydroperoxy-(5Z,8Z,10E,14Z)-eicosatetraenoate = 12-oxo-(5Z,8Z,10E,14Z)-eicosatetraenoate + H2O. It carries out the reaction (15S)-hydroperoxy-(5Z,8Z,11Z,13E)-eicosatetraenoate = 15-oxo-(5Z,8Z,11Z,13E)-eicosatetraenoate + H2O. It catalyses the reaction (13S)-hydroperoxy-(9Z,11E)-octadecadienoate = 13-oxo-(9Z,11E)-octadecadienoate + H2O. The catalysed reaction is (5Z,8Z,11Z,14Z)-eicosatetraenoate + reduced [NADPH--hemoprotein reductase] + O2 = 13-hydroxy-(5Z,8Z,11Z,14Z)-eicosatetraenoate + oxidized [NADPH--hemoprotein reductase] + H2O + H(+). The enzyme catalyses (5Z,8Z,11Z,14Z)-eicosatetraenoate + reduced [NADPH--hemoprotein reductase] + O2 = 19-hydroxy-(5Z,8Z,11Z,14Z)-eicosatetraenoate + oxidized [NADPH--hemoprotein reductase] + H2O + H(+). It carries out the reaction (9Z,12Z)-octadecadienoate + reduced [NADPH--hemoprotein reductase] + O2 = 11-hydroxy-(9Z,12Z)-octadecadienoate + oxidized [NADPH--hemoprotein reductase] + H2O + H(+). The protein operates within cofactor metabolism; retinol metabolism. It participates in steroid metabolism; cholesterol metabolism. It functions in the pathway lipid metabolism; arachidonate metabolism. In terms of biological role, a cytochrome P450 monooxygenase involved in the metabolism of various endogenous substrates, including fatty acids, steroid hormones and vitamins. Mechanistically, uses molecular oxygen inserting one oxygen atom into a substrate, and reducing the second into a water molecule, with two electrons provided by NADPH via cytochrome P450 reductase (NADPH--hemoprotein reductase). Catalyzes the hydroxylation of carbon-hydrogen bonds. Exhibits high catalytic activity for the formation of hydroxyestrogens from estrone (E1) and 17beta-estradiol (E2), namely 2-hydroxy E1 and E2. Metabolizes cholesterol toward 25-hydroxycholesterol, a physiological regulator of cellular cholesterol homeostasis. May act as a major enzyme for all-trans retinoic acid biosynthesis in the liver. Catalyzes two successive oxidative transformation of all-trans retinol to all-trans retinal and then to the active form all-trans retinoic acid. Primarily catalyzes stereoselective epoxidation of the last double bond of polyunsaturated fatty acids (PUFA), displaying a strong preference for the (R,S) stereoisomer. Catalyzes bisallylic hydroxylation and omega-1 hydroxylation of PUFA. May also participate in eicosanoids metabolism by converting hydroperoxide species into oxo metabolites (lipoxygenase-like reaction, NADPH-independent). Plays a role in the oxidative metabolism of xenobiotics. Catalyzes the N-hydroxylation of heterocyclic amines and the O-deethylation of phenacetin. Metabolizes caffeine via N3-demethylation. The chain is Cytochrome P450 1A2 (CYP1A2) from Cavia porcellus (Guinea pig).